The chain runs to 1024 residues: Beta-galactosidase (1024 aa).

Substrate is bound by residues asparagine 103 and aspartate 202. Aspartate 202 provides a ligand contact to Na(+). Residues glutamate 417, histidine 419, and glutamate 462 each contribute to the Mg(2+) site. Substrate-binding positions include glutamate 462 and 538–541; that span reads EYAH. Glutamate 462 (proton donor) is an active-site residue. Glutamate 538 acts as the Nucleophile in catalysis. Asparagine 598 is a Mg(2+) binding site. Na(+)-binding residues include phenylalanine 602 and asparagine 605. Substrate is bound by residues asparagine 605 and tryptophan 1000.

The protein belongs to the glycosyl hydrolase 2 family. As to quaternary structure, homotetramer. The cofactor is Mg(2+). Requires Na(+) as cofactor.

The enzyme catalyses Hydrolysis of terminal non-reducing beta-D-galactose residues in beta-D-galactosides.. This chain is Beta-galactosidase, found in Escherichia coli O6:H1 (strain CFT073 / ATCC 700928 / UPEC).